The primary structure comprises 131 residues: Small ribosomal subunit protein uS11 (131 aa).

It belongs to the universal ribosomal protein uS11 family. As to quaternary structure, part of the 30S ribosomal subunit. Interacts with proteins S7 and S18. Binds to IF-3.

Located on the platform of the 30S subunit, it bridges several disparate RNA helices of the 16S rRNA. Forms part of the Shine-Dalgarno cleft in the 70S ribosome. The chain is Small ribosomal subunit protein uS11 from Neisseria gonorrhoeae (strain ATCC 700825 / FA 1090).